Reading from the N-terminus, the 186-residue chain is PR-toxin biosynthesis cluster protein 7 (186 aa).

A helical transmembrane segment spans residues 24–43; sequence LGEVTTGGVTPRGTFIFCPI.

The protein localises to the membrane. Its pathway is sesquiterpene biosynthesis. Part of the gene cluster that mediates the biosynthesis of PR-toxin, a bicyclic sesquiterpene belonging to the eremophilane class and acting as a mycotoxin. The first step of the pathway is catalyzed by the aristolochene synthase which performs the cyclization of trans,trans-farnesyl diphosphate (FPP) to the bicyclic sesquiterpene aristolochene. Following the formation of aristolochene, the non-oxygenated aristolochene is converted to the trioxygenated intermediate eremofortin B, via 7-epi-neopetasone. This conversion appears to involve three enzymes, a hydroxysterol oxidase-like enzyme, the quinone-oxidase prx3 that forms the quinone-type-structure in the bicyclic nucleus of aristolochene with the C8-oxo group and the C-3 hydroxyl group, and the P450 monooxygenase ORF6 that introduces the epoxide at the double bond between carbons 1 and 2. No monoxy or dioxy-intermediates have been reported to be released to the broth, so these three early oxidative reactions may be coupled together. Eremofortin B is further oxidized by another P450 monooxygenase, that introduces a second epoxide between carbons 7 and 11 prior to acetylation to eremofortin A by the acetyltransferase ORF8. The second epoxidation may be performed by a second P450 monooxygenase. After the acetylation step, eremofortin A is converted to eremofortin C and then to PR-toxin. First the conversion of eremofortin A to eremofortin C proceeds by oxidation of the side chain of the molecule at C-12 and is catalyzed by the short-chain oxidoreductase prx1. The cytochrome P450 monooxygenase ORF6 is probably also involved in this step. The primary alcohol formed at C-12 is finally oxidized by the short-chain alcohol dehydrogenase prx4 that forms PR-toxin. The polypeptide is PR-toxin biosynthesis cluster protein 7 (Penicillium roqueforti (strain FM164)).